Consider the following 340-residue polypeptide: UDP-3-O-acylglucosamine N-acyltransferase (340 aa).

Catalysis depends on histidine 240, which acts as the Proton acceptor.

This sequence belongs to the transferase hexapeptide repeat family. LpxD subfamily. As to quaternary structure, homotrimer.

It carries out the reaction a UDP-3-O-[(3R)-3-hydroxyacyl]-alpha-D-glucosamine + a (3R)-hydroxyacyl-[ACP] = a UDP-2-N,3-O-bis[(3R)-3-hydroxyacyl]-alpha-D-glucosamine + holo-[ACP] + H(+). It functions in the pathway bacterial outer membrane biogenesis; LPS lipid A biosynthesis. Catalyzes the N-acylation of UDP-3-O-acylglucosamine using 3-hydroxyacyl-ACP as the acyl donor. Is involved in the biosynthesis of lipid A, a phosphorylated glycolipid that anchors the lipopolysaccharide to the outer membrane of the cell. This Pseudoalteromonas translucida (strain TAC 125) protein is UDP-3-O-acylglucosamine N-acyltransferase.